The following is a 141-amino-acid chain: MAKKVIGFIKLQIPAGGANPAPPVGPALGQKGVNIMEFCKQFNAKTQSEAGMIIPVVITVYTDKSFTFITKTPPAAVLLLKEAGLQKGSGEPNRNKVGTVTREQVKKIAELKKPDLNAFDLRGAEEMIMGTARSMGIVIEE.

The protein belongs to the universal ribosomal protein uL11 family. As to quaternary structure, part of the ribosomal stalk of the 50S ribosomal subunit. Interacts with L10 and the large rRNA to form the base of the stalk. L10 forms an elongated spine to which L12 dimers bind in a sequential fashion forming a multimeric L10(L12)X complex. Post-translationally, one or more lysine residues are methylated.

Functionally, forms part of the ribosomal stalk which helps the ribosome interact with GTP-bound translation factors. The protein is Large ribosomal subunit protein uL11 of Chlorobium phaeovibrioides (strain DSM 265 / 1930) (Prosthecochloris vibrioformis (strain DSM 265)).